The following is a 130-amino-acid chain: Small ribosomal subunit protein uS9 (130 aa).

The protein belongs to the universal ribosomal protein uS9 family.

This chain is Small ribosomal subunit protein uS9, found in Streptococcus equi subsp. zooepidemicus (strain H70).